The sequence spans 455 residues: MGLSVIILAAGQGKRMASSTPKILHPLGGIPLLERVVNTARLLNPHTIQVVYGNGGSHVREKLNYLPVHWIEQSQPLGTGHAVLQAIPFCQNEDRVLILYGDVPLISPKTLNSLLENTPSNGLGVVVAELPDPTGLGRIIRDDFGNILSIVEHKDAAEHQLKIREINTGIMTTTAMNLKKWLPQLNNNNCQKEYYLTDTVALAVAEGCPVGCVAAQCCEEVQGVNDRWELTKLERYYQRLMAKKLSLAGVTIIDPERFDARGENIEIAPDVVIDVNVILEGNVQLDRNVRIGPNVILKNTTVGENTEIHANSVIEAAVIKANCSVGPFARLRPGSVLEEGAKVGNFVEMKKTTLGRGSKANHLTYLGDTIIGKNVNVGAGTITCNYDGANKWQTKIEDGAFIGSNVALVAPLTVGKNATIGAGSTLSQDAPPDQLTVARERQRTIKGWHRPTKKE.

Positions 1–227 (MGLSVIILAA…CEEVQGVNDR (227 aa)) are pyrophosphorylase. UDP-N-acetyl-alpha-D-glucosamine is bound by residues 8-11 (LAAG), K22, Q73, 78-79 (GT), 100-102 (YGD), G137, E152, N167, and N225. Mg(2+) is bound at residue D102. Position 225 (N225) interacts with Mg(2+). A linker region spans residues 228–248 (WELTKLERYYQRLMAKKLSLA). The tract at residues 249–455 (GVTIIDPERF…KGWHRPTKKE (207 aa)) is N-acetyltransferase. The UDP-N-acetyl-alpha-D-glucosamine site is built by R332 and K350. H362 (proton acceptor) is an active-site residue. Positions 365 and 376 each coordinate UDP-N-acetyl-alpha-D-glucosamine. Residues A379, 385–386 (NY), S404, A422, and R439 each bind acetyl-CoA.

The protein in the N-terminal section; belongs to the N-acetylglucosamine-1-phosphate uridyltransferase family. This sequence in the C-terminal section; belongs to the transferase hexapeptide repeat family. Homotrimer. Mg(2+) serves as cofactor.

It is found in the cytoplasm. The catalysed reaction is alpha-D-glucosamine 1-phosphate + acetyl-CoA = N-acetyl-alpha-D-glucosamine 1-phosphate + CoA + H(+). It catalyses the reaction N-acetyl-alpha-D-glucosamine 1-phosphate + UTP + H(+) = UDP-N-acetyl-alpha-D-glucosamine + diphosphate. It functions in the pathway nucleotide-sugar biosynthesis; UDP-N-acetyl-alpha-D-glucosamine biosynthesis; N-acetyl-alpha-D-glucosamine 1-phosphate from alpha-D-glucosamine 6-phosphate (route II): step 2/2. The protein operates within nucleotide-sugar biosynthesis; UDP-N-acetyl-alpha-D-glucosamine biosynthesis; UDP-N-acetyl-alpha-D-glucosamine from N-acetyl-alpha-D-glucosamine 1-phosphate: step 1/1. Its pathway is bacterial outer membrane biogenesis; LPS lipid A biosynthesis. Its function is as follows. Catalyzes the last two sequential reactions in the de novo biosynthetic pathway for UDP-N-acetylglucosamine (UDP-GlcNAc). The C-terminal domain catalyzes the transfer of acetyl group from acetyl coenzyme A to glucosamine-1-phosphate (GlcN-1-P) to produce N-acetylglucosamine-1-phosphate (GlcNAc-1-P), which is converted into UDP-GlcNAc by the transfer of uridine 5-monophosphate (from uridine 5-triphosphate), a reaction catalyzed by the N-terminal domain. The polypeptide is Bifunctional protein GlmU (Coxiella burnetii (strain CbuG_Q212) (Coxiella burnetii (strain Q212))).